A 262-amino-acid chain; its full sequence is Small ribosomal subunit protein eS4 (262 aa).

Residues 42–105 enclose the S4 RNA-binding domain; the sequence is LPLXVFLRNR…NEHFRLAYDV (64 aa).

It belongs to the eukaryotic ribosomal protein eS4 family.

The chain is Small ribosomal subunit protein eS4 (RPS4) from Candida albicans (Yeast).